We begin with the raw amino-acid sequence, 700 residues long: Elongation factor G (700 aa).

Residues 8–290 (ERYRNIGISA…AVVEYLPAPT (283 aa)) form the tr-type G domain. Residues 17 to 24 (AHIDAGKT), 88 to 92 (DTPGH), and 142 to 145 (NKMD) contribute to the GTP site.

It belongs to the TRAFAC class translation factor GTPase superfamily. Classic translation factor GTPase family. EF-G/EF-2 subfamily.

The protein resides in the cytoplasm. Its function is as follows. Catalyzes the GTP-dependent ribosomal translocation step during translation elongation. During this step, the ribosome changes from the pre-translocational (PRE) to the post-translocational (POST) state as the newly formed A-site-bound peptidyl-tRNA and P-site-bound deacylated tRNA move to the P and E sites, respectively. Catalyzes the coordinated movement of the two tRNA molecules, the mRNA and conformational changes in the ribosome. The sequence is that of Elongation factor G from Haemophilus influenzae (strain 86-028NP).